The sequence spans 450 residues: 23S rRNA (uracil(1939)-C(5))-methyltransferase RlmD (450 aa).

A TRAM domain is found at 1–62; that stretch reads MPVAGPLEIV…PSYEQATLVD (62 aa). Residues C75, C81, C84, and C163 each contribute to the [4Fe-4S] cluster site. Residues Q271, F300, N305, E321, N349, and D370 each contribute to the S-adenosyl-L-methionine site. The Nucleophile role is filled by C406.

It belongs to the class I-like SAM-binding methyltransferase superfamily. RNA M5U methyltransferase family. RlmD subfamily.

The enzyme catalyses uridine(1939) in 23S rRNA + S-adenosyl-L-methionine = 5-methyluridine(1939) in 23S rRNA + S-adenosyl-L-homocysteine + H(+). Functionally, catalyzes the formation of 5-methyl-uridine at position 1939 (m5U1939) in 23S rRNA. This is 23S rRNA (uracil(1939)-C(5))-methyltransferase RlmD from Ralstonia nicotianae (strain ATCC BAA-1114 / GMI1000) (Ralstonia solanacearum).